We begin with the raw amino-acid sequence, 607 residues long: Thymidine kinase (607 aa).

2 disordered regions span residues methionine 1 to threonine 160 and aspartate 180 to leucine 215. Positions lysine 17–phenylalanine 32 are enriched in basic and acidic residues. Composition is skewed to polar residues over residues alanine 88–proline 106, arginine 148–threonine 160, and arginine 194–lysine 203. Glycine 291–threonine 298 is an ATP binding site. Glutamate 317 functions as the Proton acceptor in the catalytic mechanism. Glutamine 355 is a binding site for substrate. Arginine 445 is a binding site for ATP. Arginine 451 serves as a coordination point for substrate.

This sequence belongs to the herpesviridae thymidine kinase family. Homodimer.

The protein resides in the virion tegument. It localises to the host nucleus. The enzyme catalyses thymidine + ATP = dTMP + ADP + H(+). Catalyzes the transfer of the gamma-phospho group of ATP to thymidine to generate dTMP in the salvage pathway of pyrimidine synthesis. The dTMP serves as a substrate for DNA polymerase during viral DNA replication. Allows the virus to be reactivated and to grow in non-proliferative cells lacking a high concentration of phosphorylated nucleic acid precursors. In Epstein-Barr virus (strain AG876) (HHV-4), this protein is Thymidine kinase.